The following is a 342-amino-acid chain: Glucan endo-1,3-beta-glucosidase (342 aa).

Residues 1 to 26 (MLASSPMLLFLLSLLMAYNFDTTAGQ) form the signal peptide. E119 functions as the Proton donor in the catalytic mechanism. The active-site Nucleophile is E261.

The protein belongs to the glycosyl hydrolase 17 family. The N-terminus is blocked.

The protein resides in the vacuole. The catalysed reaction is Hydrolysis of (1-&gt;3)-beta-D-glucosidic linkages in (1-&gt;3)-beta-D-glucans.. Functionally, is thought to be an important plant defense-related product against fungal pathogens. Accumulation of the glucanase can be detected as early as 4 hours after inoculation. This Brassica campestris (Field mustard) protein is Glucan endo-1,3-beta-glucosidase (BGL).